A 463-amino-acid chain; its full sequence is Putative ankyrin repeat protein R579 (463 aa).

ANK repeat units follow at residues 124 to 154 (LKTDLMFYAVSKNVSIDVINFLIDMDCKCTI), 156 to 181 (SITRAIAEKKLDIAKIIIDHNPSENI), 242 to 271 (KEKNISSYVIQSNSLNVVKTFVEHGLQFNP), 273 to 299 (IYLWVNGNSESENIVRYIIELGIDYRP), 300 to 328 (HIDRLLKICITSGTFSHLEYLINLGVSQE), 329 to 355 (NINEAFLTAVSEDKFELIKYLIYMGAD), 356 to 385 (INYKNTIAASYTDNIDVLKYLIEKGADITT), and 387 to 416 (GSNDVINHAIGSHQSDFCRCLLENGATITL).

The sequence is that of Putative ankyrin repeat protein R579 from Acanthamoeba polyphaga (Amoeba).